A 547-amino-acid chain; its full sequence is Apolipoprotein N-acyltransferase (547 aa).

The next 5 membrane-spanning stretches (helical) occupy residues Ile-31–Phe-51, Phe-71–Tyr-91, Leu-106–Gly-126, Leu-180–Val-200, and Ala-210–Trp-230. Positions Val-247 to Phe-515 constitute a CN hydrolase domain. Glu-294 (proton acceptor) is an active-site residue. Residue Lys-364 is part of the active site. Residue Cys-418 is the Nucleophile of the active site. A helical membrane pass occupies residues Phe-515–Ile-535.

It belongs to the CN hydrolase family. Apolipoprotein N-acyltransferase subfamily.

Its subcellular location is the cell inner membrane. The enzyme catalyses N-terminal S-1,2-diacyl-sn-glyceryl-L-cysteinyl-[lipoprotein] + a glycerophospholipid = N-acyl-S-1,2-diacyl-sn-glyceryl-L-cysteinyl-[lipoprotein] + a 2-acyl-sn-glycero-3-phospholipid + H(+). Its pathway is protein modification; lipoprotein biosynthesis (N-acyl transfer). Functionally, catalyzes the phospholipid dependent N-acylation of the N-terminal cysteine of apolipoprotein, the last step in lipoprotein maturation. This is Apolipoprotein N-acyltransferase from Bdellovibrio bacteriovorus (strain ATCC 15356 / DSM 50701 / NCIMB 9529 / HD100).